Here is a 163-residue protein sequence, read N- to C-terminus: uncharacterized protein (163 aa).

This is an uncharacterized protein from Orgyia pseudotsugata (Douglas-fir tussock moth).